Reading from the N-terminus, the 314-residue chain is Ribosomal RNA small subunit methyltransferase H (314 aa).

S-adenosyl-L-methionine contacts are provided by residues 36-38 (GGH), Asp56, Phe83, Asp104, and Gln111.

Belongs to the methyltransferase superfamily. RsmH family.

The protein resides in the cytoplasm. The enzyme catalyses cytidine(1402) in 16S rRNA + S-adenosyl-L-methionine = N(4)-methylcytidine(1402) in 16S rRNA + S-adenosyl-L-homocysteine + H(+). Its function is as follows. Specifically methylates the N4 position of cytidine in position 1402 (C1402) of 16S rRNA. The chain is Ribosomal RNA small subunit methyltransferase H from Syntrophotalea carbinolica (strain DSM 2380 / NBRC 103641 / GraBd1) (Pelobacter carbinolicus).